The sequence spans 1028 residues: Sodium/potassium-transporting ATPase subunit alpha-4 (1028 aa).

A disordered region spans residues 1-36 (MEPGKETAATSEQKPRPTLRASNTNRQPKVKRRKKD). Residues 1-92 (MEPGKETAAT…NVLTPPPTTP (92 aa)) are Cytoplasmic-facing. An interaction with phosphoinositide-3 kinase region spans residues 87 to 89 (PPP). A helical transmembrane segment spans residues 93-113 (EWIKFCKQLFGGFSLLLWTGS). The Extracellular portion of the chain corresponds to 114-137 (LLCFLAYGIHVSYYQENANKDNLY). The helical transmembrane segment at 138 to 158 (LGIVLSAVVIITGCFSYYQEA) threads the bilayer. Residues 159–294 (KSSKIMESFK…MGKTPIATEI (136 aa)) are Cytoplasmic-facing. The helical transmembrane segment at 295 to 314 (EHFIHIITAVAVFLGVTFFF) threads the bilayer. At 315 to 326 (LSLILGYTWLDA) the chain is on the extracellular side. A helical membrane pass occupies residues 327–344 (VIFLIGIIVANVPEGLLA). At 345 to 777 (TVTVCLTLTA…EEGRLIFDNL (433 aa)) the chain is on the cytoplasmic side. The active-site 4-aspartylphosphate intermediate is the D382. Mg(2+) contacts are provided by D722 and D726. Residues 778 to 797 (KKSIAYTLTSNIPEITPFLL) form a helical membrane-spanning segment. The Extracellular portion of the chain corresponds to 798-807 (FIVLSIPLPL). A helical transmembrane segment spans residues 808–828 (GTITILCIDLGTDMVPAISLA). Over 829–848 (YETPESDIMKRLPRNPKTDN) the chain is Cytoplasmic. A helical transmembrane segment spans residues 849-871 (LVNDRLIGMAYGQIGMIQALAGF). Residues 872-923 (FTYFVILAENGFKPLDLLGIRLYWDDTNLNDLEDTYGQQWTYEQRKVVEFTC) lie on the Extracellular side of the membrane. A helical membrane pass occupies residues 924–943 (QTAFFISIVIVQWADLIICK). Residues 944–956 (TRRNSLFKQGMKN) are Cytoplasmic-facing. Residue S948 is modified to Phosphoserine; by PKA. Residues 957 to 975 (KVLIFGLLEETILAACLSY) form a helical membrane-spanning segment. Residues 976 to 990 (IPGMDVALRMYPLKI) lie on the Extracellular side of the membrane. A helical transmembrane segment spans residues 991–1011 (NWWFCALPYSVLIFIYDEVRK). The Cytoplasmic portion of the chain corresponds to 1012 to 1028 (LIIRRRPGGWLEKETYY).

The protein belongs to the cation transport ATPase (P-type) (TC 3.A.3) family. Type IIC subfamily. As to quaternary structure, the sodium/potassium-transporting ATPase is composed of a catalytic alpha subunit, an auxiliary non-catalytic beta subunit and an additional regulatory subunit.

It localises to the cell membrane. It carries out the reaction K(+)(out) + Na(+)(in) + ATP + H2O = K(+)(in) + Na(+)(out) + ADP + phosphate + H(+). Specifically inhibited by an endogenous cardiac glycoside, ouabain. This is the catalytic component of the active enzyme, which catalyzes the hydrolysis of ATP coupled with the exchange of sodium and potassium ions across the plasma membrane. This action creates the electrochemical gradient of sodium and potassium ions, providing the energy for active transport of various nutrients. Plays a role in sperm motility. The polypeptide is Sodium/potassium-transporting ATPase subunit alpha-4 (Atp1a4) (Rattus norvegicus (Rat)).